A 197-amino-acid chain; its full sequence is Transcription factor FapR (197 aa).

This sequence belongs to the FapR family.

Transcriptional factor involved in regulation of membrane lipid biosynthesis by repressing genes involved in fatty acid and phospholipid metabolism. The chain is Transcription factor FapR from Bacillus cytotoxicus (strain DSM 22905 / CIP 110041 / 391-98 / NVH 391-98).